We begin with the raw amino-acid sequence, 648 residues long: Shugoshin (648 aa).

Coiled coils occupy residues 95–122 and 208–273; these read LMIK…RLSV and DDRA…KDEA. Disordered regions lie at residues 188–239, 262–334, 367–443, 483–518, and 628–648; these read KVVG…RSSR, EADK…QEDA, VYRD…RPRR, TNRK…AAED, and HRAR…KVST. 2 stretches are compositionally biased toward basic and acidic residues: residues 200–217 and 262–273; these read VRGE…HQEA and EADKSRSAKDEA. Residues 306 to 315 show a composition bias toward polar residues; the sequence is ASGTLTQSNE. 2 stretches are compositionally biased toward basic and acidic residues: residues 424–440 and 490–509; these read IVVD…DATR and QREG…HEQD.

This sequence belongs to the shugoshin family.

Its subcellular location is the nucleus. The protein localises to the chromosome. The protein resides in the centromere. In terms of biological role, plays a central role in chromosome cohesion during cell division by preventing premature dissociation of cohesin complex from centromeres after prophase, when most of cohesin complex dissociates from chromosomes arms. May act by protecting RAD21 and or REC8 from cleavage by ESP1/separase. The protein is Shugoshin (SGO1) of Eremothecium gossypii (strain ATCC 10895 / CBS 109.51 / FGSC 9923 / NRRL Y-1056) (Yeast).